The following is a 303-amino-acid chain: Dihydroorotate dehydrogenase B (NAD(+)), catalytic subunit (303 aa).

FMN-binding positions include serine 21 and 45-46 (KG). Substrate-binding positions include lysine 45 and 69–73 (NCIGL). The FMN site is built by asparagine 98 and asparagine 126. Asparagine 126 is a substrate binding site. Cysteine 129 functions as the Nucleophile in the catalytic mechanism. Residues lysine 165 and valine 191 each coordinate FMN. 192 to 193 (NT) is a binding site for substrate. FMN is bound by residues glycine 217 and 243–244 (GG).

The protein belongs to the dihydroorotate dehydrogenase family. Type 1 subfamily. Heterotetramer of 2 PyrK and 2 PyrD type B subunits. FMN serves as cofactor.

The protein resides in the cytoplasm. It catalyses the reaction (S)-dihydroorotate + NAD(+) = orotate + NADH + H(+). Its pathway is pyrimidine metabolism; UMP biosynthesis via de novo pathway; orotate from (S)-dihydroorotate (NAD(+) route): step 1/1. Its function is as follows. Catalyzes the conversion of dihydroorotate to orotate with NAD(+) as electron acceptor. This Brachyspira hyodysenteriae (strain ATCC 49526 / WA1) protein is Dihydroorotate dehydrogenase B (NAD(+)), catalytic subunit (pyrD).